We begin with the raw amino-acid sequence, 162 residues long: CASP-like protein 1C1 (162 aa).

Over 1 to 7 the chain is Cytoplasmic; it reads MFSAKAR. The chain crosses the membrane as a helical span at residues 8–28; sequence WIVAVVLRVAAAGAAAVAAVL. Over 29-52 the chain is Extracellular; the sequence is MAMSHDEVIVYGMEVQAKFRYTPS. The helical transmembrane segment at 53-73 threads the bilayer; the sequence is LVFFVAANAAVSACSLVVLLV. At 74–83 the chain is on the cytoplasmic side; that stretch reads PSSTSKLAAR. The chain crosses the membrane as a helical span at residues 84-104; it reads LLLMADVVLGMVLAGAFAAAG. The Extracellular segment spans residues 105–135; that stretch reads AMAELGKNGNSHAGWIAICVQVPLFCDRVRS. A helical transmembrane segment spans residues 136 to 156; that stretch reads ALVAGSATIVLYYLMLMYSIY. At 157–162 the chain is on the cytoplasmic side; it reads TLPMFP.

The protein belongs to the Casparian strip membrane proteins (CASP) family. As to quaternary structure, homodimer and heterodimers.

The protein localises to the cell membrane. The chain is CASP-like protein 1C1 from Oryza sativa subsp. japonica (Rice).